We begin with the raw amino-acid sequence, 577 residues long: Proline--tRNA ligase (577 aa).

Belongs to the class-II aminoacyl-tRNA synthetase family. ProS type 1 subfamily. As to quaternary structure, homodimer.

It localises to the cytoplasm. The catalysed reaction is tRNA(Pro) + L-proline + ATP = L-prolyl-tRNA(Pro) + AMP + diphosphate. Functionally, catalyzes the attachment of proline to tRNA(Pro) in a two-step reaction: proline is first activated by ATP to form Pro-AMP and then transferred to the acceptor end of tRNA(Pro). As ProRS can inadvertently accommodate and process non-cognate amino acids such as alanine and cysteine, to avoid such errors it has two additional distinct editing activities against alanine. One activity is designated as 'pretransfer' editing and involves the tRNA(Pro)-independent hydrolysis of activated Ala-AMP. The other activity is designated 'posttransfer' editing and involves deacylation of mischarged Ala-tRNA(Pro). The misacylated Cys-tRNA(Pro) is not edited by ProRS. This Thermotoga maritima (strain ATCC 43589 / DSM 3109 / JCM 10099 / NBRC 100826 / MSB8) protein is Proline--tRNA ligase.